The primary structure comprises 72 residues: Translation initiation factor IF-1 (72 aa).

Positions 1–72 constitute an S1-like domain; sequence MAKEEAIEIE…TKGRITYRYK (72 aa).

Belongs to the IF-1 family. As to quaternary structure, component of the 30S ribosomal translation pre-initiation complex which assembles on the 30S ribosome in the order IF-2 and IF-3, IF-1 and N-formylmethionyl-tRNA(fMet); mRNA recruitment can occur at any time during PIC assembly.

It localises to the cytoplasm. In terms of biological role, one of the essential components for the initiation of protein synthesis. Stabilizes the binding of IF-2 and IF-3 on the 30S subunit to which N-formylmethionyl-tRNA(fMet) subsequently binds. Helps modulate mRNA selection, yielding the 30S pre-initiation complex (PIC). Upon addition of the 50S ribosomal subunit IF-1, IF-2 and IF-3 are released leaving the mature 70S translation initiation complex. This is Translation initiation factor IF-1 from Chlorobium phaeobacteroides (strain DSM 266 / SMG 266 / 2430).